Consider the following 337-residue polypeptide: Meiotic driver wtf4 (337 aa).

Basic and acidic residues predominate over residues 1 to 29 (MKNKDYPLRSSMDELSTKNDNEIDLEKGP). Positions 1-40 (MKNKDYPLRSSMDELSTKNDNEIDLEKGPLPEYNSEDEST) are disordered. 6 helical membrane-spanning segments follow: residues 89–109 (LLIS…CVNP), 119–139 (AFFV…FCFF), 149–169 (CIKV…VGLY), 176–196 (VVII…RSKF), 210–230 (CSIS…FWTL), and 234–254 (FSGL…TKGL).

This sequence belongs to the WTF family. In terms of assembly, homomer. Forms protein aggregates. The two isoforms can interact with each other and with themselves. High sequence similarity is required for their interaction.

It localises to the spore membrane. The protein resides in the vacuole membrane. Its subcellular location is the ascus epiplasm. It is found in the cytoplasm. The protein localises to the endoplasmic reticulum membrane. Its function is as follows. Promotes unequal transmission of alleles from the parental zygote to progeny spores by acting as poison/antidote system where the poison and antidote proteins are produced from the same locus; the poison component is trans-acting and targets all spores within an ascus whereas the antidote component is spore-specific, leading to poisoning of all progeny that do not inherit the allele. In terms of biological role, localizes isoform 2 to the vacuole thereby facilitating its degradation. Functionally, forms toxic aggregates that disrupt spore maturation. The protein is Meiotic driver wtf4 of Schizosaccharomyces kambucha (Fission yeast).